The sequence spans 430 residues: Glutamate-1-semialdehyde 2,1-aminomutase (430 aa).

Lys-265 is modified (N6-(pyridoxal phosphate)lysine).

It belongs to the class-III pyridoxal-phosphate-dependent aminotransferase family. HemL subfamily. In terms of assembly, homodimer. Pyridoxal 5'-phosphate is required as a cofactor.

It localises to the cytoplasm. The enzyme catalyses (S)-4-amino-5-oxopentanoate = 5-aminolevulinate. It functions in the pathway porphyrin-containing compound metabolism; protoporphyrin-IX biosynthesis; 5-aminolevulinate from L-glutamyl-tRNA(Glu): step 2/2. The polypeptide is Glutamate-1-semialdehyde 2,1-aminomutase (Shewanella putrefaciens (strain CN-32 / ATCC BAA-453)).